Consider the following 957-residue polypeptide: Thioredoxin domain-containing protein 11 (957 aa).

The span at 1–13 (MSECGGRGGGGGS) shows a compositional bias: gly residues. The interval 1 to 47 (MSECGGRGGGGGSSSSSDDAEDEGGGGGPAGSGSLSPAPAASSEGRL) is disordered. The segment covering 32–44 (SGSLSPAPAASSE) has biased composition (low complexity). Residues 64 to 84 (LLCGAVALGCALLLALKFTCS) form a helical membrane-spanning segment. One can recognise a Thioredoxin 1 domain in the interval 91–213 (IPAKPPVSFF…IEKFVRRVMK (123 aa)). 2 disulfides stabilise this stretch: cysteine 441–cysteine 444 and cysteine 691–cysteine 694. The Thioredoxin 2 domain maps to 621-771 (LDPKQALMKF…LLRFILHHSD (151 aa)). Residues 785-889 (AECLQNEAVL…ADASETLLTE (105 aa)) adopt a coiled-coil conformation. Over residues 904–925 (LEGRDGADDRVPPSKARSEHPE) the composition is skewed to basic and acidic residues. A disordered region spans residues 904–957 (LEGRDGADDRVPPSKARSEHPEPPGAPRLPASTPLPANISSTLASEGSPENRTD). The span at 941–951 (NISSTLASEGS) shows a compositional bias: polar residues.

The protein belongs to the protein disulfide isomerase family. As to quaternary structure, interacts with the cytoplasmic part of DUOX1 and DUOX2. Interacts with TPO and CYBA.

The protein resides in the endoplasmic reticulum membrane. In terms of biological role, may act as a redox regulator involved in DUOX proteins folding. The interaction with DUOX1 and DUOX2 suggest that it belongs to a multiprotein complex constituting the thyroid H(2)O(2) generating system. It is however not sufficient to assist DUOX1 and DUOX2 in H(2)O(2) generation. This Bos taurus (Bovine) protein is Thioredoxin domain-containing protein 11 (TXNDC11).